Consider the following 68-residue polypeptide: Large ribosomal subunit protein uL29 (68 aa).

The protein belongs to the universal ribosomal protein uL29 family.

This is Large ribosomal subunit protein uL29 from Prochlorococcus marinus (strain SARG / CCMP1375 / SS120).